A 58-amino-acid polypeptide reads, in one-letter code: Photosystem II reaction center protein K (58 aa).

Residues 1–21 (MLAIFNIYLDNAFHLNGIILA) constitute a propeptide that is removed on maturation. The chain crosses the membrane as a helical span at residues 29-49 (IFDPIVDVMPIIPVFFFLLAF).

This sequence belongs to the PsbK family. As to quaternary structure, PSII is composed of 1 copy each of membrane proteins PsbA, PsbB, PsbC, PsbD, PsbE, PsbF, PsbH, PsbI, PsbJ, PsbK, PsbL, PsbM, PsbT, PsbX, PsbY, PsbZ, Psb30/Ycf12, at least 3 peripheral proteins of the oxygen-evolving complex and a large number of cofactors. It forms dimeric complexes.

The protein localises to the plastid. The protein resides in the chloroplast thylakoid membrane. In terms of biological role, one of the components of the core complex of photosystem II (PSII). PSII is a light-driven water:plastoquinone oxidoreductase that uses light energy to abstract electrons from H(2)O, generating O(2) and a proton gradient subsequently used for ATP formation. It consists of a core antenna complex that captures photons, and an electron transfer chain that converts photonic excitation into a charge separation. This chain is Photosystem II reaction center protein K, found in Physcomitrium patens (Spreading-leaved earth moss).